Here is a 206-residue protein sequence, read N- to C-terminus: Large ribosomal subunit protein uL4 (206 aa).

Positions 46 to 89 (GNRAQKTRAEVKHSTKKPWRQKGTGRARSGMTSSPLWRKGGRAF) are disordered. Residues 59–70 (STKKPWRQKGTG) are compositionally biased toward basic residues.

The protein belongs to the universal ribosomal protein uL4 family. As to quaternary structure, part of the 50S ribosomal subunit.

One of the primary rRNA binding proteins, this protein initially binds near the 5'-end of the 23S rRNA. It is important during the early stages of 50S assembly. It makes multiple contacts with different domains of the 23S rRNA in the assembled 50S subunit and ribosome. Its function is as follows. Forms part of the polypeptide exit tunnel. This is Large ribosomal subunit protein uL4 from Neisseria gonorrhoeae (strain NCCP11945).